The following is a 520-amino-acid chain: Protein FAM124A (520 aa).

Disordered stretches follow at residues 1–34 (MDRKAGEDDWEDSGAETGGSDYSRLSSTSSELSV) and 311–334 (FKSGKHKGRAGNGQVQHFGGSQMD). Residues 20–32 (SDYSRLSSTSSEL) show a composition bias toward low complexity.

This sequence belongs to the FAM124 family.

This Xenopus laevis (African clawed frog) protein is Protein FAM124A (fam124a).